Here is a 460-residue protein sequence, read N- to C-terminus: UDP-N-acetylmuramoyl-tripeptide--D-alanyl-D-alanine ligase (460 aa).

ATP is bound at residue 115–121 (GSSGKTS).

It belongs to the MurCDEF family. MurF subfamily.

The protein localises to the cytoplasm. It catalyses the reaction D-alanyl-D-alanine + UDP-N-acetyl-alpha-D-muramoyl-L-alanyl-gamma-D-glutamyl-meso-2,6-diaminopimelate + ATP = UDP-N-acetyl-alpha-D-muramoyl-L-alanyl-gamma-D-glutamyl-meso-2,6-diaminopimeloyl-D-alanyl-D-alanine + ADP + phosphate + H(+). It participates in cell wall biogenesis; peptidoglycan biosynthesis. In terms of biological role, involved in cell wall formation. Catalyzes the final step in the synthesis of UDP-N-acetylmuramoyl-pentapeptide, the precursor of murein. In Buchnera aphidicola subsp. Baizongia pistaciae (strain Bp), this protein is UDP-N-acetylmuramoyl-tripeptide--D-alanyl-D-alanine ligase.